Here is a 128-residue protein sequence, read N- to C-terminus: Large ribosomal subunit protein bL12 (128 aa).

Belongs to the bacterial ribosomal protein bL12 family. In terms of assembly, homodimer. Part of the ribosomal stalk of the 50S ribosomal subunit. Forms a multimeric L10(L12)X complex, where L10 forms an elongated spine to which 2 to 4 L12 dimers bind in a sequential fashion. Binds GTP-bound translation factors.

Its function is as follows. Forms part of the ribosomal stalk which helps the ribosome interact with GTP-bound translation factors. Is thus essential for accurate translation. The chain is Large ribosomal subunit protein bL12 from Phenylobacterium zucineum (strain HLK1).